A 260-amino-acid chain; its full sequence is Proteasome assembly chaperone 2 (260 aa).

Belongs to the PSMG2 family. Forms a heterodimer with psmg1. Post-translationally, degraded by the proteasome upon completion of 20S proteasome maturation.

The protein localises to the nucleus. Functionally, chaperone protein which promotes assembly of the 20S proteasome as part of a heterodimer with psmg1. This is Proteasome assembly chaperone 2 from Danio rerio (Zebrafish).